A 377-amino-acid chain; its full sequence is tRNA(Met) cytidine acetate ligase (377 aa).

Residues 7 to 20 (VTEY…HLYH), Gly100, Asn153, and Arg178 each bind ATP.

Belongs to the TmcAL family.

It localises to the cytoplasm. It carries out the reaction cytidine(34) in elongator tRNA(Met) + acetate + ATP = N(4)-acetylcytidine(34) in elongator tRNA(Met) + AMP + diphosphate. Catalyzes the formation of N(4)-acetylcytidine (ac(4)C) at the wobble position of elongator tRNA(Met), using acetate and ATP as substrates. First activates an acetate ion to form acetyladenylate (Ac-AMP) and then transfers the acetyl group to tRNA to form ac(4)C34. The chain is tRNA(Met) cytidine acetate ligase from Staphylococcus saprophyticus subsp. saprophyticus (strain ATCC 15305 / DSM 20229 / NCIMB 8711 / NCTC 7292 / S-41).